The following is a 1196-amino-acid chain: Beta/alpha-amylase (1196 aa).

An N-terminal signal peptide occupies residues 1-35; sequence MTLYRSLWKKGCMLLLSLVLSLTAFIGSPSNTASA. Positions 36 to 454 are beta-amylase; that stretch reads AVADDFQASV…IISKAKPDNN (419 aa). D76 contributes to the substrate binding site. Ca(2+) contacts are provided by E83 and D87. 2 residues coordinate substrate: H116 and D124. C118 and C126 form a disulfide bridge. E170 contributes to the Ca(2+) binding site. Residue E198 is the Proton donor of the active site. Residues K314, H319, and T357 each contribute to the substrate site. E394 acts as the Proton acceptor in catalysis. Substrate-binding positions include 395 to 396 and R423; that span reads NA. Repeats lie at residues 455-558 and 565-668; these read GGTG…APAG and GGTT…APSG. Over residues 544 to 553 the composition is skewed to polar residues; the sequence is NSGNAGTITS. The tract at residues 544–566 is disordered; it reads NSGNAGTITSGAPAGANPGDGGG. The alpha-amylase stretch occupies residues 669-1196; that stretch reads SVLSVVTSTY…APKEVKVFTK (528 aa).

The protein in the N-terminal section; belongs to the glycosyl hydrolase 14 family. This sequence in the C-terminal section; belongs to the glycosyl hydrolase 13 family. Ca(2+) is required as a cofactor.

The protein resides in the secreted. The enzyme catalyses Hydrolysis of (1-&gt;4)-alpha-D-glucosidic linkages in polysaccharides so as to remove successive maltose units from the non-reducing ends of the chains.. It catalyses the reaction Endohydrolysis of (1-&gt;4)-alpha-D-glucosidic linkages in polysaccharides containing three or more (1-&gt;4)-alpha-linked D-glucose units.. Its function is as follows. The precursor protein is proteolytically cleaved to produce multiform beta-amylases and a 48 kDa alpha-amylase after secretion. The chain is Beta/alpha-amylase from Paenibacillus polymyxa (Bacillus polymyxa).